A 213-amino-acid chain; its full sequence is Uridine kinase (213 aa).

12-19 (GGSCSGKT) serves as a coordination point for ATP.

This sequence belongs to the uridine kinase family.

The protein resides in the cytoplasm. The enzyme catalyses uridine + ATP = UMP + ADP + H(+). It carries out the reaction cytidine + ATP = CMP + ADP + H(+). Its pathway is pyrimidine metabolism; CTP biosynthesis via salvage pathway; CTP from cytidine: step 1/3. The protein operates within pyrimidine metabolism; UMP biosynthesis via salvage pathway; UMP from uridine: step 1/1. The polypeptide is Uridine kinase (udk) (Mycoplasma genitalium (strain ATCC 33530 / DSM 19775 / NCTC 10195 / G37) (Mycoplasmoides genitalium)).